Reading from the N-terminus, the 256-residue chain is Ras-related protein Rab-26 (256 aa).

The disordered stretch occupies residues 1–53 (MSRKKTPKSKAGSAPATSALPAANGPRPVRPGTARPGPEAPPNGPPQPGRSSV). The span at 38–48 (PEAPPNGPPQP) shows a compositional bias: pro residues. GTP-binding residues include S72, G73, V74, G75, K76, T77, C78, S95, and T96. A Mg(2+)-binding site is contributed by T77. 2 consecutive short sequence motifs (switch) follow at residues 86–101 (GAFL…GIDF) and 119–136 (DTAG…YYRD). Positions 96 and 119 each coordinate Mg(2+). Positions 122, 177, 178, 180, 208, and 209 each coordinate GTP. 2 S-geranylgeranyl cysteine lipidation sites follow: C253 and C254.

It belongs to the small GTPase superfamily. Rab family. Requires Mg(2+) as cofactor.

The protein localises to the cell membrane. It catalyses the reaction GTP + H2O = GDP + phosphate + H(+). Its activity is regulated as follows. Regulated by guanine nucleotide exchange factors (GEFs) which promote the exchange of bound GDP for free GTP. Regulated by GTPase activating proteins (GAPs) which increase the GTP hydrolysis activity. Inhibited by GDP dissociation inhibitors (GDIs). In terms of biological role, the small GTPases Rab are key regulators of intracellular membrane trafficking, from the formation of transport vesicles to their fusion with membranes. Rabs cycle between an inactive GDP-bound form and an active GTP-bound form that is able to recruit to membranes different set of downstream effectors directly responsible for vesicle formation, movement, tethering and fusion. RAB26 mediates transport of ADRA2A and ADRA2B from the Golgi to the cell membrane. Plays a role in the maturation of zymogenic granules and in pepsinogen secretion in the stomach. Plays a role in the secretion of amylase from acinar granules in the parotid gland. This Bos taurus (Bovine) protein is Ras-related protein Rab-26 (RAB26).